We begin with the raw amino-acid sequence, 1432 residues long: Probable ATP-dependent RNA helicase spindle-E (1432 aa).

A Helicase ATP-binding domain is found at 125–292; it reads MKAIRENTVV…FATKNGIPPV (168 aa). ATP is bound at residue 138-145; it reads GETGCGKT. The DEAH box motif lies at 238-241; sequence DEVH. One can recognise a Helicase C-terminal domain in the interval 342–525; it reads VIDNMERRTE…SSVLKAKELN (184 aa). The Tudor domain maps to 936-999; the sequence is AGSITKNLKL…RFMSNQLKRE (64 aa).

It belongs to the DEAD box helicase family. DEAH subfamily.

Its subcellular location is the cytoplasm. It carries out the reaction ATP + H2O = ADP + phosphate + H(+). Its function is as follows. Probable ATP-binding RNA helicase which plays a central role during spermatogenesis and oogenesis by repressing transposable elements and preventing their mobilization, which is essential for the germline integrity. Acts via the piRNA metabolic process, which mediates the repression of transposable elements during meiosis by forming complexes composed of piRNAs and Piwi and govern the methylation and subsequent repression of transposons. Involved in the repression of LTR retrotransposon copia. Also involved in telomere regulation by repressing specialized telomeric retroelements HeT-A, TAHRE, and TART; Drosophila telomeres being maintained by transposition of specialized telomeric retroelements. Involved in telomeric trans-silencing, a repression mechanism by which a transposon or a transgene inserted in subtelomeric heterochromatin has the capacity to repress in trans in the female germline, a homologous transposon, or transgene located in euchromatin. Involved in the repression of testis-expressed Stellate genes by the homologous Su(Ste) repeats. Required for anteroposterior and dorsoventral axis formation during oogenesis. The protein is Probable ATP-dependent RNA helicase spindle-E (spn-E) of Drosophila willistoni (Fruit fly).